The chain runs to 347 residues: 4-hydroxy-2-oxovalerate aldolase 2 (347 aa).

A Pyruvate carboxyltransferase domain is found at 7 to 259 (VRITDTSLRD…KTGIDFFDIA (253 aa)). 15–16 (RD) is a substrate binding site. Aspartate 16 is a binding site for Mn(2+). Histidine 19 functions as the Proton acceptor in the catalytic mechanism. Substrate-binding residues include serine 169 and histidine 198. Mn(2+) contacts are provided by histidine 198 and histidine 200. Tyrosine 289 contributes to the substrate binding site.

The protein belongs to the 4-hydroxy-2-oxovalerate aldolase family.

The catalysed reaction is (S)-4-hydroxy-2-oxopentanoate = acetaldehyde + pyruvate. The protein is 4-hydroxy-2-oxovalerate aldolase 2 of Mycobacterium ulcerans (strain Agy99).